We begin with the raw amino-acid sequence, 196 residues long: Peptidyl-tRNA hydrolase (196 aa).

Tyr18 provides a ligand contact to tRNA. His23 serves as the catalytic Proton acceptor. Residues Phe69, Asn71, and Asn117 each coordinate tRNA.

It belongs to the PTH family. Monomer.

Its subcellular location is the cytoplasm. It carries out the reaction an N-acyl-L-alpha-aminoacyl-tRNA + H2O = an N-acyl-L-amino acid + a tRNA + H(+). Its function is as follows. Hydrolyzes ribosome-free peptidyl-tRNAs (with 1 or more amino acids incorporated), which drop off the ribosome during protein synthesis, or as a result of ribosome stalling. Catalyzes the release of premature peptidyl moieties from peptidyl-tRNA molecules trapped in stalled 50S ribosomal subunits, and thus maintains levels of free tRNAs and 50S ribosomes. This chain is Peptidyl-tRNA hydrolase, found in Aliivibrio fischeri (strain MJ11) (Vibrio fischeri).